Here is a 572-residue protein sequence, read N- to C-terminus: MGLFDKLLRSNERAERGSPSAFVVSSFDSVSNAGKSSIFKHSGMKSYILEFEIVLDDVHRVWKPNETISGTVKLRLRKDVPNVWIKLAHIGEFQLHSNNPMTAGSLKSKYSDTVFCRSTSIYGSEENPLHLTGGEHKFPFSCKINGKNLVSSIDFKKGSIRYWVQAELHAQKTPPIFCKQHYQLIVPIDVGQLPKPNIKTVVLQSPNSSNNGIHVRRLMAAGSADPQDGASSLTRKTGGSSTITNGSSSSNNSGNSNASMLADNKTVKISVEIPCLGYTIGEEIPVKVHVTHYKQYFHPAGLIATLVRISRVSNPRNTEQIETFRKDICQGVAPLYTDPETHEAVIMLKLKVPLDTFPSLDLKNKFFTFQYYVEILANLSRKNLVYTESNRLVGGQRTSSIPMPSNKFSMFQDLSNQGEVTAGEDDSVTFFQDLINVDRLKRLRNVTGMSIEVVIGTHREEHEPESPTVDRLDSHSINQLPDDVDAVYNQCSSAESPIDEAYDYLLHRHNGPSPSSRIFTDTDMTLCYPADPVPLYSRGLDDFTGCSMSGVTDDKQELEQMRLKELESEPPI.

A disordered region spans residues alanine 221–asparagine 257. The segment covering threonine 237–asparagine 257 has biased composition (low complexity).

It belongs to the arrestin family. PalF/RIM8 subfamily.

In terms of biological role, required for the proteolytic cleavage of the transcription factor RIM101 in response to alkaline ambient pH. The protein is pH-response regulator protein palF/RIM8 (RIM8) of Kluyveromyces lactis (strain ATCC 8585 / CBS 2359 / DSM 70799 / NBRC 1267 / NRRL Y-1140 / WM37) (Yeast).